Here is a 118-residue protein sequence, read N- to C-terminus: Small ribosomal subunit protein uS13 (118 aa).

The disordered stretch occupies residues G94–K118.

The protein belongs to the universal ribosomal protein uS13 family. In terms of assembly, part of the 30S ribosomal subunit. Forms a loose heterodimer with protein S19. Forms two bridges to the 50S subunit in the 70S ribosome.

Its function is as follows. Located at the top of the head of the 30S subunit, it contacts several helices of the 16S rRNA. In the 70S ribosome it contacts the 23S rRNA (bridge B1a) and protein L5 of the 50S subunit (bridge B1b), connecting the 2 subunits; these bridges are implicated in subunit movement. Contacts the tRNAs in the A and P-sites. The sequence is that of Small ribosomal subunit protein uS13 from Tolumonas auensis (strain DSM 9187 / NBRC 110442 / TA 4).